Consider the following 934-residue polypeptide: Protein unc-45 homolog B (934 aa).

TPR repeat units follow at residues 9–42 (SVQLKEEGNKHFQAGEIDQAIDCYTKAIKTCKKE), 48–81 (AVIYRNRSACFLKKENYSNAASDATKAIDVDAAD), and 83–115 (KALYRRCQAFEKLGKLDMAFKDVQRCATIEPKN). 3 ARM repeats span residues 174 to 213 (DAGAERIFQNNGVPLLMQLIDTGKPEMILAAIRTLSGMCT), 216 to 255 (RARATAIIHSVGISKLCSIMAVDNEEIALATANLFQCVND), and 753 to 792 (DKLRVKILKEKALPEIENYMFEDHEQIRQAATECMCNLVC).

In terms of assembly, interacts with apobec2a, apobec2b, hsp90a.1, hsp90a.2, hsp90ab1 and myosin. As to expression, expressed in striated muscle tissue including somites, heart and craniofacial muscle. Detected in mesoderm adjacent to the dorsal midline during the late gastrula stages and in somitic mesoderm during development of trunk skeletal muscle. Also expressed in cranial skeletal muscle and in cardiac and smooth muscle. Detected in somitic muscle and heart primordium of 24 hour embryos. At later stages, expressed in muscles of pectoral fins, jaw, branchial arches and eye.

It is found in the cytoplasm. The protein resides in the myofibril. The protein localises to the sarcomere. Its subcellular location is the z line. It localises to the a band. It is found in the perinuclear region. Its function is as follows. Acts as a co-chaperone for HSP90 and is required for proper folding of the myosin motor domain. Plays a role in sarcomere formation during muscle cell development. Required for myoseptal integrity, myofiber attachment, motility and craniofacial development. Is necessary for normal early lens development. The sequence is that of Protein unc-45 homolog B from Danio rerio (Zebrafish).